The chain runs to 416 residues: Protein P47 (416 aa).

This sequence belongs to the TULIP P47 family. Part of a crude toxin extract that includes BoNTA2/NTNH, P47, OrfX2 and OrfX3; OrfX1 was not detected.

Functionally, part of a botulinum neurotoxin type A2 (BoNT) locus; may be part of a progenitor toxin complex required to protect BoNT during its passage through the host gastrointestinal tract. The polypeptide is Protein P47 (Clostridium botulinum (strain Kyoto / Type A2)).